The chain runs to 505 residues: Kinesin light chain 3 (505 aa).

Residues 1-20 are disordered; it reads MSVQVAAPGSTGLGPERLNP. Residues 90-150 adopt a coiled-coil conformation; sequence ALSAHVGVLE…EEEKSHLQFL (61 aa). The segment at 154–197 is disordered; it reads RQYDPPEESQRPDSPPRRDSLASLFPSEEEEKKGPEAAGAAAAQ. Residues 161–173 are compositionally biased toward basic and acidic residues; it reads ESQRPDSPPRRDS. Serine 173 carries the phosphoserine modification. TPR repeat units follow at residues 207–240, 249–282, 291–324, 333–366, and 375–408; these read LRTLHNLVIQYASQGRYEVAVPLCRQALEDLERS, ATMLNILALVYRDQNKYKEATELLHDALQIREQT, AATLNNLAVLYGKRGRYREAEPLCQRALEIREKV, AKQLNNLALLCQNQGKFQDVERHYARALSIYEAL, and AKTKNNLASAYLKQNKYQQAEELYKEILSQEALP. The tract at residues 409–439 is disordered; the sequence is APLGAPQGGTAGEAQQQVLRRSSSFSKLRES. The span at 421–434 shows a compositional bias: polar residues; it reads EAQQQVLRRSSSFS. Serine 467 carries the phosphoserine modification. Residues 486 to 505 form a disordered region; sequence QHLNEASRTLSASTQDLSPR. At threonine 499 the chain carries Phosphothreonine. Phosphoserine is present on serine 503.

Belongs to the kinesin light chain family. As to quaternary structure, oligomer composed of two heavy chains and two light chains. Associates with microtubulin in an ATP-dependent manner. Interacts with KIF5C. Interacts with ODF1. Interacts with LRGUK. Interacts with VDAC2. In terms of tissue distribution, expressed in postmeiotic male germ cells (at protein level).

Its subcellular location is the cytoplasm. The protein localises to the cytoskeleton. The protein resides in the mitochondrion. Kinesin is a microtubule-associated force-producing protein that may play a role in organelle transport. Plays a role during spermiogenesis in the development of the sperm tail midpiece and in the normal function of spermatozoa. May play a role in the formation of the mitochondrial sheath formation in the developing spermatid midpiece. This is Kinesin light chain 3 (Klc3) from Rattus norvegicus (Rat).